The following is a 558-amino-acid chain: Alpha-1,3-mannosyltransferase MNT2 (558 aa).

The Cytoplasmic segment spans residues M1–R6. Residues L7–S27 form a helical; Signal-anchor for type II membrane protein membrane-spanning segment. Over L28–I558 the chain is Lumenal. N-linked (GlcNAc...) asparagine glycosylation is present at N187.

This sequence belongs to the MNN1/MNT family.

The protein resides in the golgi apparatus membrane. It functions in the pathway protein modification; protein glycosylation. Functionally, mannosyltransferase involved in adding the 4th and 5th mannose residues of O-linked glycans. This is Alpha-1,3-mannosyltransferase MNT2 (MNT2) from Saccharomyces cerevisiae (strain ATCC 204508 / S288c) (Baker's yeast).